The following is a 117-amino-acid chain: UPF0342 protein LEUM_1212 (117 aa).

Belongs to the UPF0342 family.

This Leuconostoc mesenteroides subsp. mesenteroides (strain ATCC 8293 / DSM 20343 / BCRC 11652 / CCM 1803 / JCM 6124 / NCDO 523 / NBRC 100496 / NCIMB 8023 / NCTC 12954 / NRRL B-1118 / 37Y) protein is UPF0342 protein LEUM_1212.